The following is a 315-amino-acid chain: Prephenate dehydratase (315 aa).

One can recognise a Prephenate dehydratase domain in the interval 7–190; it reads VVAYLGPAGT…ARTRFVAVQA (184 aa). The ACT domain occupies 204–283; sequence SVIFSLPNVP…LVFVGSWPSN (80 aa).

It catalyses the reaction prephenate + H(+) = 3-phenylpyruvate + CO2 + H2O. It participates in amino-acid biosynthesis; L-phenylalanine biosynthesis; phenylpyruvate from prephenate: step 1/1. The polypeptide is Prephenate dehydratase (pheA) (Corynebacterium glutamicum (strain ATCC 13032 / DSM 20300 / JCM 1318 / BCRC 11384 / CCUG 27702 / LMG 3730 / NBRC 12168 / NCIMB 10025 / NRRL B-2784 / 534)).